The following is a 337-amino-acid chain: 2-oxoglutarate receptor 1 (337 aa).

Over 1–34 the chain is Extracellular; that stretch reads MNEPLDYLANASDFPDYAAAFGNCTDENIPLKMH. Asparagine 10 and asparagine 23 each carry an N-linked (GlcNAc...) asparagine glycan. Residues 35 to 55 traverse the membrane as a helical segment; that stretch reads YLPVIYGIIFLVGFPGNAVVI. The Cytoplasmic portion of the chain corresponds to 56 to 69; sequence STYIFKMRPWKSST. The helical transmembrane segment at 70–90 threads the bilayer; it reads IIMLNLACTDLLYLTSLPFLI. The Extracellular segment spans residues 91-116; the sequence is HYYASGENWIFGDFMCKFIRFSFHFN. The cysteines at positions 106 and 183 are disulfide-linked. A helical membrane pass occupies residues 117–137; that stretch reads LYSSILFLTCFSIFRYCVIIH. The Cytoplasmic portion of the chain corresponds to 138 to 151; the sequence is PMSCFSIHKTRCAV. The helical transmembrane segment at 152 to 172 threads the bilayer; sequence VACAVVWIISLVAVIPMTFLI. Topologically, residues 173–201 are extracellular; the sequence is TSTNRTNRSACLDLTSSDELNTIKWYNLI. N-linked (GlcNAc...) asparagine glycosylation is found at asparagine 176 and asparagine 179. The helical transmembrane segment at 202-222 threads the bilayer; it reads LTATTFCLPLVIVTLCYTTII. Over 223 to 242 the chain is Cytoplasmic; sequence HTLTHGLQTDSCLKQKARRL. Residues 243 to 263 form a helical membrane-spanning segment; it reads TILLLLAFYVCFLPFHILRVI. Residues 264–284 lie on the Extracellular side of the membrane; sequence RIESRLLSISCSIENQIHEAY. A helical transmembrane segment spans residues 285–305; the sequence is IVSRPLAALNTFGNLLLYVVV. The Cytoplasmic segment spans residues 306–337; sequence SDNFQQAVCSTVRCKVSGNLEQAKKISYSNNP.

This sequence belongs to the G-protein coupled receptor 1 family. In terms of tissue distribution, detected in kidney and, to a lower extent, in placenta. Not detected in brain tissues including the frontal cortex, caudate putamen, thalamus, hypothalamus, hippocampus or pons.

Its subcellular location is the cell membrane. G protein-coupled receptor for dicarboxylates and amino dicarboxylates. Receptor for itaconate, a metabolite produced by myeloid lineages. In the respiratory epithelium, couples the binding of itaconate to the activation of GNA11 and downstream intracellular Ca(2+) release, leading to mucocilliary clearance of airborne pathogens. Receptor for leukotriene E4 (LTE4) produced by mast cells upon allergic inflammation. Binds with high affinity to LTE4 and elicits mucin release from pulmonary epithelium in response to airborne fungi allergens. Regulates mucin-producing goblet cell homeostasis. Receptor for alpha-ketoglutarate produced by proximal tubule renal cells upon metabolic alkalosis. In an intrarenal paracrine signaling pathway, binds alpha-ketoglutarate and drives transepithelial salt reabsorption and bicarbonate secretion by SLC26A4/pendrin-positive intercalated cells. In Homo sapiens (Human), this protein is 2-oxoglutarate receptor 1 (OXGR1).